A 109-amino-acid chain; its full sequence is Large ribosomal subunit protein uL23 (109 aa).

Belongs to the universal ribosomal protein uL23 family. Part of the 50S ribosomal subunit. Contacts protein L29, and trigger factor when it is bound to the ribosome.

Its function is as follows. One of the early assembly proteins it binds 23S rRNA. One of the proteins that surrounds the polypeptide exit tunnel on the outside of the ribosome. Forms the main docking site for trigger factor binding to the ribosome. This is Large ribosomal subunit protein uL23 from Aquifex pyrophilus.